The primary structure comprises 428 residues: Histidine--tRNA ligase (428 aa).

The protein belongs to the class-II aminoacyl-tRNA synthetase family.

It localises to the cytoplasm. The enzyme catalyses tRNA(His) + L-histidine + ATP = L-histidyl-tRNA(His) + AMP + diphosphate + H(+). The sequence is that of Histidine--tRNA ligase from Korarchaeum cryptofilum (strain OPF8).